The chain runs to 138 residues: Transcriptional activator protein Pur-alpha (138 aa).

The residue at position 70 (Ser70) is a Phosphoserine.

It belongs to the PUR DNA-binding protein family. As to quaternary structure, homodimer, heterodimer with PURB and heterotrimer with PURB and YBX1/Y-box protein 1. Interacts with FMR1; this interaction occurs in association with polyribosome.

The protein localises to the nucleus. This is a probable transcription activator that specifically binds the purine-rich single strand of the PUR element located upstream of the c-Myc gene. May play a role in the initiation of DNA replication and in recombination. The protein is Transcriptional activator protein Pur-alpha of Rattus norvegicus (Rat).